The primary structure comprises 116 residues: Iron-sulfur cluster insertion protein ErpA (116 aa).

Residues Cys-44, Cys-108, and Cys-110 each contribute to the iron-sulfur cluster site.

This sequence belongs to the HesB/IscA family. As to quaternary structure, homodimer. It depends on iron-sulfur cluster as a cofactor.

Functionally, required for insertion of 4Fe-4S clusters for at least IspG. This chain is Iron-sulfur cluster insertion protein ErpA, found in Stutzerimonas stutzeri (strain A1501) (Pseudomonas stutzeri).